We begin with the raw amino-acid sequence, 419 residues long: L-rhamnose isomerase (419 aa).

Residues H262, D294, and D296 each coordinate Mn(2+).

Belongs to the rhamnose isomerase family. Homotetramer. Requires Mn(2+) as cofactor.

Its subcellular location is the cytoplasm. It carries out the reaction L-rhamnopyranose = L-rhamnulose. It participates in carbohydrate degradation; L-rhamnose degradation; glycerone phosphate from L-rhamnose: step 1/3. Catalyzes the interconversion of L-rhamnose and L-rhamnulose. This is L-rhamnose isomerase from Shigella flexneri.